The primary structure comprises 463 residues: SVGFKAGVKDYKLTYYTPDYETKDTDILAAFRVTPQPGVPPEEAGGAVAAESSTGTWTTVWTDGLTSLDRYKGRCYHIEPVAGEENQYIAYVAYPLDLFEEGSVTNMFTSIVGNVFGFKALRALRLEDLRIPPAYVKTFQGPPHGIQVERDKLNKYGRPLLGCTIKPKLGLSAKNYGRAVFECLRGGLDFTKDDENVNSQPFMRWRDRFLFCAEAIYKAQAETGEIKGHYLNATAGTCEEMMKRAVFARELGVPIVMHDYLTGGFTANTSLAHYCRDNGLLLHIHRAMHAVIDRQKNHGIHFRVLAKALRMSGGDHIHSGTVVGKLEGERDITLGFVDLLRDDFVEKDRSRGIYFTQDWVSLPGVLTVASGGIHVWHMPALTEIFGDDSVLQFGGGTLGHPWGNAPGAVANRVALEACVQARNEGRDLATEGNAIIRKACKWSTELAAACEVWKEIKFEFAAM.

Position 5 is an N6,N6,N6-trimethyllysine (K5). Substrate contacts are provided by N114 and T164. Catalysis depends on K166, which acts as the Proton acceptor. K168 contributes to the substrate binding site. The Mg(2+) site is built by K192, D194, and E195. Position 192 is an N6-carboxylysine (K192). H285 acts as the Proton acceptor in catalysis. Substrate-binding residues include R286, H318, and S370.

It belongs to the RuBisCO large chain family. Type I subfamily. Heterohexadecamer of 8 large chains and 8 small chains; disulfide-linked. The disulfide link is formed within the large subunit homodimers. The cofactor is Mg(2+). Post-translationally, the disulfide bond which can form in the large chain dimeric partners within the hexadecamer appears to be associated with oxidative stress and protein turnover.

It localises to the plastid. The protein localises to the chloroplast. The enzyme catalyses 2 (2R)-3-phosphoglycerate + 2 H(+) = D-ribulose 1,5-bisphosphate + CO2 + H2O. It catalyses the reaction D-ribulose 1,5-bisphosphate + O2 = 2-phosphoglycolate + (2R)-3-phosphoglycerate + 2 H(+). In terms of biological role, ruBisCO catalyzes two reactions: the carboxylation of D-ribulose 1,5-bisphosphate, the primary event in carbon dioxide fixation, as well as the oxidative fragmentation of the pentose substrate in the photorespiration process. Both reactions occur simultaneously and in competition at the same active site. The chain is Ribulose bisphosphate carboxylase large chain from Pelargonium grandiflorum (Geranium).